A 308-amino-acid polypeptide reads, in one-letter code: UDP-N-acetylenolpyruvoylglucosamine reductase (308 aa).

One can recognise an FAD-binding PCMH-type domain in the interval 32–196; sequence VGGPAARLYK…ISAKLQLSPG (165 aa). Residue Arg176 is part of the active site. The active-site Proton donor is Ser225. Residue Glu296 is part of the active site.

Belongs to the MurB family. It depends on FAD as a cofactor.

It is found in the cytoplasm. The enzyme catalyses UDP-N-acetyl-alpha-D-muramate + NADP(+) = UDP-N-acetyl-3-O-(1-carboxyvinyl)-alpha-D-glucosamine + NADPH + H(+). It participates in cell wall biogenesis; peptidoglycan biosynthesis. Cell wall formation. This Legionella pneumophila subsp. pneumophila (strain Philadelphia 1 / ATCC 33152 / DSM 7513) protein is UDP-N-acetylenolpyruvoylglucosamine reductase.